The sequence spans 391 residues: Saxitoxin and tetrodotoxin-binding protein 1 (391 aa).

The signal sequence occupies residues 1–20 (MGAVPGVVLLLMLAVLGIRA). Tandem repeats lie at residues 24–202 (PEEC…HKKS) and 203–391 (PEEC…PEQD). 7 N-linked (GlcNAc...) asparagine glycosylation sites follow: Asn54, Asn63, Asn97, Asn234, Asn268, Asn277, and Asn307.

Homodimer or heterodimer of PSTBP1 and PSTBP2. In terms of processing, glycosylated.

The protein localises to the secreted. Functionally, binds both saxitoxin and tetradotoxin. May play a role in toxin accumulation and/or excretion. This chain is Saxitoxin and tetrodotoxin-binding protein 1 (psbp1), found in Takifugu pardalis (Panther puffer).